A 436-amino-acid polypeptide reads, in one-letter code: MQVSVETTQGLERRLTITVPADKIEKEYNSRLNQVAKTRRIDGFRPGKAPKALIQKMYGESIVADVADAVMQRHFVEALVAEKLNPVGAPTLEPNQLVPGSDFTFTVSFEVYPEFKVQNLDAIKVEKPVATVSDADLDKMLTTLRKQHASWVDADEAAANDLRVNMDFVGSVDGEEFEGGKAEGFALVLGAGRMIPGFEAGILGKKAGESFDIEVTFPEDYHAENLKGKAAKFAIKLNKVEKQDLPELDAEFIKRFGVEDGSVESLKAEIRKNMERELTQALKGQVKEQILSGLLEQNLIDVPKAAVTREVEALRQQALQRFGAANSKNVPQLPDELFQEQAERRVRVGLLLGEVIREQDIKADDARVKTLIESLATAYEDPSEVVDYYFQNERLLNNMRDLAVEDQAIEFLLSQAQVTEKATSFDEVINKAGAAA.

Positions 161-246 (DLRVNMDFVG…LNKVEKQDLP (86 aa)) constitute a PPIase FKBP-type domain.

Belongs to the FKBP-type PPIase family. Tig subfamily.

It is found in the cytoplasm. The catalysed reaction is [protein]-peptidylproline (omega=180) = [protein]-peptidylproline (omega=0). Its function is as follows. Involved in protein export. Acts as a chaperone by maintaining the newly synthesized protein in an open conformation. Functions as a peptidyl-prolyl cis-trans isomerase. This Tolumonas auensis (strain DSM 9187 / NBRC 110442 / TA 4) protein is Trigger factor.